A 291-amino-acid polypeptide reads, in one-letter code: MEMO1 family protein TK1477 (291 aa).

It belongs to the MEMO1 family.

This chain is MEMO1 family protein TK1477, found in Thermococcus kodakarensis (strain ATCC BAA-918 / JCM 12380 / KOD1) (Pyrococcus kodakaraensis (strain KOD1)).